We begin with the raw amino-acid sequence, 647 residues long: Threonine--tRNA ligase (647 aa).

The TGS domain maps to 1–61; the sequence is MIKITFPDGA…EEDGSIEIVT (61 aa). Residues 240–538 are catalytic; sequence DHRKLGKELD…LIETYKGAFP (299 aa). Residues C334, H385, and H515 each coordinate Zn(2+).

Belongs to the class-II aminoacyl-tRNA synthetase family. As to quaternary structure, homodimer. Zn(2+) serves as cofactor.

Its subcellular location is the cytoplasm. It carries out the reaction tRNA(Thr) + L-threonine + ATP = L-threonyl-tRNA(Thr) + AMP + diphosphate + H(+). Its function is as follows. Catalyzes the attachment of threonine to tRNA(Thr) in a two-step reaction: L-threonine is first activated by ATP to form Thr-AMP and then transferred to the acceptor end of tRNA(Thr). Also edits incorrectly charged L-seryl-tRNA(Thr). This Streptococcus pyogenes serotype M2 (strain MGAS10270) protein is Threonine--tRNA ligase.